Consider the following 155-residue polypeptide: Cathelicidin-1 (155 aa).

Positions 1–29 (METQRASLSLGRCSLWLLLLGLALPSASA) are cleaved as a signal peptide. Gln-30 carries the post-translational modification Pyrrolidone carboxylic acid. The propeptide occupies 30-143 (QVLSYREAVL…KQPWAPPQAA (114 aa)). Disulfide bonds link Cys-85–Cys-96, Cys-107–Cys-124, and Cys-146–Cys-154.

Belongs to the cathelicidin family.

It localises to the secreted. Its function is as follows. Potent microbicidal activity; active against S.aureus and E.coli. This Ovis aries (Sheep) protein is Cathelicidin-1 (CATHL1A).